The chain runs to 110 residues: G antigen 2E (110 aa).

The interval methionine 1–glutamate 110 is disordered. 2 stretches are compositionally biased toward acidic residues: residues phenylalanine 32–glutamate 45 and glutamate 87–glutamate 96.

This sequence belongs to the GAGE family.

The sequence is that of G antigen 2E (GAGE2E) from Homo sapiens (Human).